A 364-amino-acid chain; its full sequence is Protein spindle-F (364 aa).

A disordered region spans residues 1 to 26; sequence MEASAAKITPMASSMSASGSTNSPSS. Residues 9-26 show a composition bias toward low complexity; that stretch reads TPMASSMSASGSTNSPSS. Positions 32–114 form a coiled coil; sequence ALQVALQTIK…GMVSNENRRL (83 aa). Ser-53 is subject to Phosphoserine. The segment at 56–75 is disordered; it reads EENQQLREASSRSEGAPRAN. 3 positions are modified to phosphoserine: Ser-85, Ser-172, and Ser-202. The stretch at 210-243 forms a coiled coil; that stretch reads AKRCLDGLQELRREAMKQQQELRSVMTLLENRIA. Ser-264 and Ser-270 each carry phosphoserine. A UBZ1-type zinc finger spans residues 310-336; it reads EKTCPMCGKQYSSQVSFNAFREHVEMH. Cys-313 and Cys-316 together coordinate Zn(2+). Ser-325 is subject to Phosphoserine. Positions 332 and 336 each coordinate Zn(2+). Ser-349 is subject to Phosphoserine.

Forms homooligomers. Interacts with the dynein light chain ctp. Interacts (via C-terminus) with IKKepsilon; this leads to phosphorylation of spn-F. Forms ternary complexes with ctp and IKKepsilon; this is required for spn-F redistribution from puncta in larval neurons and for dendrite pruning. Interacts with ctp and IKKepsilon through distinct regions. Interacts (via C-terminus) with jvl. Post-translationally, phosphorylated by IKKepsilon. Phosphorylation is required for spn-F neuronal distribution and dendrite pruning and reduces spn-F homooligomerization. It does not lead to spn-F degradation. In terms of tissue distribution, in pupal bristles, localizes to the bristle tip throughout the elongation period (at protein level).

The protein localises to the cytoplasm. It is found in the cytoskeleton. The protein resides in the cell projection. It localises to the axon. Its subcellular location is the dendrite. The protein localises to the perikaryon. Functionally, plays a role in oocyte axis determination and microtubule organization during oogenesis. Also required for polarized organization of the bristle. Required, with jvl, for activation of the kinase IKKepsilon in the germ line. Also required for localization of IKKepsilon to the distal tip of elongating bristles by acting as an adapter linking IKKepsilon and cytoplasmic dynein. Involved in dendrite pruning in larval sensory neurons during metamorphosis. This Drosophila melanogaster (Fruit fly) protein is Protein spindle-F.